A 142-amino-acid chain; its full sequence is SPbeta prophage-derived deoxyuridine 5'-triphosphate nucleotidohydrolase YosS (142 aa).

Ser62 and Asn74 together coordinate dUMP. The Proton acceptor role is filled by Asp80. 2 residues coordinate dUMP: Tyr83 and Phe91.

It belongs to the dUTPase family. As to quaternary structure, homotrimer. It depends on Mg(2+) as a cofactor.

It catalyses the reaction dUTP + H2O = dUMP + diphosphate + H(+). The protein operates within pyrimidine metabolism; dUMP biosynthesis; dUMP from dCTP (dUTP route): step 2/2. Its function is as follows. Involved in nucleotide metabolism: produces dUMP, the immediate precursor of thymidine nucleotides and decreases the intracellular concentration of dUTP, so that uracil cannot be incorporated into DNA. The Ser-62 side chain changes its position upon ligand-binding to make contacts with the nucleotide phosphates. This is SPbeta prophage-derived deoxyuridine 5'-triphosphate nucleotidohydrolase YosS from Bacillus subtilis (strain 168).